The chain runs to 753 residues: Probable TonB-dependent siderophore receptor PiuA (753 aa).

The first 35 residues, 1–35, serve as a signal peptide directing secretion; the sequence is MSRQSTDTAVSSQRLLASAIGVAITAIAAPQAAQA. The region spanning 79 to 185 is the TBDR plug domain; that stretch reads PLLDTPKTVT…TGGSLNLISK (107 aa). One can recognise a TBDR beta-barrel domain in the interval 190–753; it reads DNFTDAGFTW…TALLGVNFHF (564 aa). Residues C420 and C430 are joined by a disulfide bond.

Belongs to the TonB-dependent receptor family.

Its subcellular location is the cell outer membrane. Functionally, involved in the initial step of iron uptake by binding iron chelating siderophores, thereby allowing extraction of iron from the environment. Probably involved in the transport of siderophores, including host catecholamines such as dopamine. The polypeptide is Probable TonB-dependent siderophore receptor PiuA (Pseudomonas aeruginosa (strain ATCC 15692 / DSM 22644 / CIP 104116 / JCM 14847 / LMG 12228 / 1C / PRS 101 / PAO1)).